We begin with the raw amino-acid sequence, 183 residues long: Capsid protein (183 aa).

Residues 136–183 form a disordered region; sequence NAPILSTLPETTVVRRRGRSPRRRTPSPRRRRSQSPRRRRSQSPASQC. The segment covering 149–176 has biased composition (basic residues); the sequence is VRRRGRSPRRRTPSPRRRRSQSPRRRRS. Ser-155, Ser-162, and Ser-170 each carry phosphoserine; by host. A 1; half-length repeat occupies 155–161; it reads SPRRRTP. A 3 X 8 AA repeats of S-P-R-R-R-[PR]-S-Q region spans residues 155 to 177; that stretch reads SPRRRTPSPRRRRSQSPRRRRSQ. A Bipartite nuclear localization signal motif is present at residues 158–175; it reads RRTPSPRRRRSQSPRRRR. A run of 2 repeats spans residues 162-169 and 170-177. An RNA binding region spans residues 177–183; the sequence is QSPASQC.

It belongs to the orthohepadnavirus core antigen family. In terms of assembly, homodimerizes, then multimerizes. Interacts with cytosol exposed regions of viral L glycoprotein present in the reticulum-to-Golgi compartment. Interacts with human FLNB. Phosphorylated form interacts with host importin alpha; this interaction depends on the exposure of the NLS, which itself depends upon genome maturation and/or phosphorylation of the capsid protein. Interacts with host NUP153. In terms of processing, phosphorylated by host SRPK1, SRPK2, and maybe protein kinase C or GAPDH. Phosphorylation is critical for pregenomic RNA packaging. Protein kinase C phosphorylation is stimulated by HBx protein and may play a role in transport of the viral genome to the nucleus at the late step during the viral replication cycle.

The protein resides in the virion. It localises to the host cytoplasm. In terms of biological role, self assembles to form an icosahedral capsid. Most capsids appear to be large particles with an icosahedral symmetry of T=4 and consist of 240 copies of capsid protein, though a fraction forms smaller T=3 particles consisting of 180 capsid proteins. Entering capsids are transported along microtubules to the nucleus. Phosphorylation of the capsid is thought to induce exposure of nuclear localization signal in the C-terminal portion of the capsid protein that allows binding to the nuclear pore complex via the importin (karyopherin-) alpha and beta. Capsids are imported in intact form through the nuclear pore into the nuclear basket, where it probably binds NUP153. Only capsids that contain the mature viral genome can release the viral DNA and capsid protein into the nucleoplasm. Immature capsids get stuck in the basket. Capsids encapsulate the pre-genomic RNA and the P protein. Pre-genomic RNA is reverse-transcribed into DNA while the capsid is still in the cytoplasm. The capsid can then either be directed to the nucleus, providing more genomes for transcription, or bud through the endoplasmic reticulum to provide new virions. This is Capsid protein from Hylobatidae (gibbons).